The following is a 191-amino-acid chain: Calcium-activated potassium channel subunit beta-1 (191 aa).

Residues Met-1 to Arg-15 are Cytoplasmic-facing. The chain crosses the membrane as a helical span at residues Ala-16 to Thr-36. Over Thr-37–Leu-157 the chain is Extracellular. Asn-80 and Asn-142 each carry an N-linked (GlcNAc...) asparagine glycan. The chain crosses the membrane as a helical span at residues Leu-158–Val-178. Topologically, residues Lys-179 to Lys-191 are cytoplasmic.

Belongs to the KCNMB (TC 8.A.14.1) family. KCNMB1 subfamily. As to quaternary structure, interacts with KCNMA1 tetramer. There are probably 4 molecules of KCMNB1 per KCNMA1 tetramer. In terms of processing, N-glycosylated.

The protein localises to the membrane. In terms of biological role, regulatory subunit of the calcium activated potassium KCNMA1 (maxiK) channel. Modulates the calcium sensitivity and gating kinetics of KCNMA1, thereby contributing to KCNMA1 channel diversity. Increases the apparent Ca(2+)/voltage sensitivity of the KCNMA1 channel. It also modifies KCNMA1 channel kinetics and alters its pharmacological properties. It slows down the activation and the deactivation kinetics of the channel. Acts as a negative regulator of smooth muscle contraction by enhancing the calcium sensitivity to KCNMA1. Its presence is also a requirement for internal binding of the KCNMA1 channel opener dehydrosoyasaponin I (DHS-1) triterpene glycoside and for external binding of the agonist hormone 17-beta-estradiol (E2). Increases the binding activity of charybdotoxin (CTX) toxin to KCNMA1 peptide blocker by increasing the CTX association rate and decreasing the dissociation rate. The sequence is that of Calcium-activated potassium channel subunit beta-1 (KCNMB1) from Oryctolagus cuniculus (Rabbit).